The sequence spans 355 residues: Protein ECERIFERUM 16 (355 aa).

Disordered regions lie at residues 1–60 and 296–315; these read MDSK…LPSN and HSST…KIHM. Over residues 7-28 the composition is skewed to basic residues; that stretch reads AKSKRAHTLHHSKKSHSVHKPK. Polar residues-rich tracts occupy residues 41 to 53 and 296 to 310; these read QGNQ…QSRR and HSST…NPSD.

Interacts with RST1. Expressed in taproots, lateral roots, root tips, leaf veins, cauline leaves, inflorescences, flowers, and siliques.

It is found in the cytoplasm. Its subcellular location is the cytosol. The protein resides in the endoplasmic reticulum. In terms of biological role, together with RST1, acts as a cofactor of the cytoplasmic exosome and connects the cytosolic RNA exosome to the SKI complex. Acts as a post-transcriptional gene silencing (PTGS) suppressor. CER16/RIPR can, like RST1 suppress the production of small interfering RNAs (siRNAs) from the CER3 locus, which is involved in cuticule membrane and wax production, and in the typhine and sporopollenin biosynthesis of pollen. The chain is Protein ECERIFERUM 16 from Arabidopsis thaliana (Mouse-ear cress).